We begin with the raw amino-acid sequence, 86 residues long: UPF0512 protein V (86 aa).

This sequence belongs to the UPF0512 family.

The sequence is that of UPF0512 protein V from Dictyostelium discoideum (Social amoeba).